The primary structure comprises 2222 residues: DNA polymerase epsilon catalytic subunit A (2222 aa).

The tract at residues 90-110 is disordered; that stretch reads ETLSSGSNGGGNSNDGERVTT. Residues Cys-2108, Cys-2111, Cys-2130, and Cys-2133 each contribute to the Zn(2+) site. A CysA-type zinc finger spans residues 2108–2133; sequence CEYCFFISDIDFCKAAPESIFSCVRC. The [4Fe-4S] cluster site is built by Cys-2164, Cys-2167, Cys-2179, and Cys-2181. Positions 2164–2181 match the CysB motif motif; that stretch reads CSRCHKVKRDYMSAHCPC.

It belongs to the DNA polymerase type-B family. In terms of assembly, DNA polymerase epsilon is a heterotetramer consisting of POL2, DPB2, DPB3 and DPB4. [4Fe-4S] cluster serves as cofactor.

Its subcellular location is the nucleus. It carries out the reaction DNA(n) + a 2'-deoxyribonucleoside 5'-triphosphate = DNA(n+1) + diphosphate. Catalytic component of the DNA polymerase epsilon complex which participates in chromosomal DNA replication. Required during synthesis of the leading DNA strands at the replication fork, binds at/or near replication origins and moves along DNA with the replication fork. Has 3'-5' proofreading exonuclease activity that corrects errors arising during DNA replication. This Saccharomyces cerevisiae (strain ATCC 204508 / S288c) (Baker's yeast) protein is DNA polymerase epsilon catalytic subunit A (POL2).